A 726-amino-acid polypeptide reads, in one-letter code: Elongation factor 2 (726 aa).

Residues 19–260 enclose the tr-type G domain; the sequence is DRIRNIGICA…MVIKHLPSPP (242 aa). GTP contacts are provided by residues 28-35, 94-98, and 148-151; these read AHIDHGKT, DTPGH, and NKVD. His-602 bears the Diphthamide mark.

It belongs to the TRAFAC class translation factor GTPase superfamily. Classic translation factor GTPase family. EF-G/EF-2 subfamily.

The protein localises to the cytoplasm. Its function is as follows. Catalyzes the GTP-dependent ribosomal translocation step during translation elongation. During this step, the ribosome changes from the pre-translocational (PRE) to the post-translocational (POST) state as the newly formed A-site-bound peptidyl-tRNA and P-site-bound deacylated tRNA move to the P and E sites, respectively. Catalyzes the coordinated movement of the two tRNA molecules, the mRNA and conformational changes in the ribosome. The chain is Elongation factor 2 (fusA) from Methanocaldococcus jannaschii (strain ATCC 43067 / DSM 2661 / JAL-1 / JCM 10045 / NBRC 100440) (Methanococcus jannaschii).